The primary structure comprises 207 residues: MGMLEARELLCERDERTLFSGLSFTLNAGEWVQITGSNGAGKTTLLRLLTGLSRPDAGEVLWQGQPLHQVRDSYHQNLLWIGHQPGIKTRLTALENLHFYHRDGDTAQCLEALAQAGLAGFEDIPVNQLSAGQQRRVALARLWLTRATLWILDEPFTAIDVNGVDRLTQRMAQHTEQGGIVILTTHQPLNVAESKIRRISLTQTRAA.

The region spanning 4 to 207 is the ABC transporter domain; it reads LEARELLCER…RISLTQTRAA (204 aa). 36-43 lines the ATP pocket; that stretch reads GSNGAGKT.

It belongs to the ABC transporter superfamily. CcmA exporter (TC 3.A.1.107) family. As to quaternary structure, the complex is composed of two ATP-binding proteins (CcmA) and two transmembrane proteins (CcmB).

It localises to the cell inner membrane. It carries out the reaction heme b(in) + ATP + H2O = heme b(out) + ADP + phosphate + H(+). Its function is as follows. Part of the ABC transporter complex CcmAB involved in the biogenesis of c-type cytochromes; once thought to export heme, this seems not to be the case, but its exact role is uncertain. Responsible for energy coupling to the transport system. This chain is Cytochrome c biogenesis ATP-binding export protein CcmA, found in Shigella boydii serotype 4 (strain Sb227).